The sequence spans 82 residues: DNA-directed RNA polymerase subunit Rpo5 (82 aa).

The protein belongs to the archaeal Rpo5/eukaryotic RPB5 RNA polymerase subunit family. In terms of assembly, part of the RNA polymerase complex.

The protein resides in the cytoplasm. It carries out the reaction RNA(n) + a ribonucleoside 5'-triphosphate = RNA(n+1) + diphosphate. Functionally, DNA-dependent RNA polymerase (RNAP) catalyzes the transcription of DNA into RNA using the four ribonucleoside triphosphates as substrates. The polypeptide is DNA-directed RNA polymerase subunit Rpo5 (Thermococcus kodakarensis (strain ATCC BAA-918 / JCM 12380 / KOD1) (Pyrococcus kodakaraensis (strain KOD1))).